The chain runs to 598 residues: Elongation factor 4 (598 aa).

The tr-type G domain maps to 5-187; the sequence is SHIRNFSIIA…RLVATIPAPI (183 aa). Residues 17–22 and 134–137 each bind GTP; these read DHGKST and NKID.

It belongs to the TRAFAC class translation factor GTPase superfamily. Classic translation factor GTPase family. LepA subfamily.

It localises to the cell inner membrane. It carries out the reaction GTP + H2O = GDP + phosphate + H(+). In terms of biological role, required for accurate and efficient protein synthesis under certain stress conditions. May act as a fidelity factor of the translation reaction, by catalyzing a one-codon backward translocation of tRNAs on improperly translocated ribosomes. Back-translocation proceeds from a post-translocation (POST) complex to a pre-translocation (PRE) complex, thus giving elongation factor G a second chance to translocate the tRNAs correctly. Binds to ribosomes in a GTP-dependent manner. This is Elongation factor 4 from Pseudomonas fluorescens (strain Pf0-1).